A 513-amino-acid chain; its full sequence is MAVLLALFGALVLSGGLCVNQEERLIHHLFEERGYNKEVRPVASADEVVDVYLALTLSNLISLKEVDETLTTNVWVEQSWTDYRLQWNTSEFGGVDVLRLLPEMLWLPEIVLENNNDGLFEVAYYCNVLVYNTGYVYWLPPAIFRSACPINVNFFPFDWQNCTLKFSSLAYNAQEINMHLKEESDPETEKNYRVEWIIIDPEGFTENGEWEIIHRPARKNIHPSYPTESSEHQDITFYLIIKRKPLFYVINIVTPCVLIAFMAILVFYLPADSGEKMTLVISVLLAQSVFLLLVSQRLPATSHAIPLIGKYLLFIMLLVTAVVVICVVVLNFHFRTPSTHVMSDWVRGVFLEILPRLLHMSHPAESPAGAPCIRRCSSAGYIAKAEEYYSVKSRSELMFEKQSERHGLASRVTPARFAPAATSEEQLYDHLKPTLDEANFIVKHMREKNSYNEEKDNWNRVARTLDRLCLFLITPMLVVGTLWIFLMGIYNHPPPLPFSGDPFDYREENKRYI.

The first 18 residues, 1–18 (MAVLLALFGALVLSGGLC), serve as a signal peptide directing secretion. Topologically, residues 19–244 (VNQEERLIHH…ITFYLIIKRK (226 aa)) are extracellular. Asparagine 88 and asparagine 161 each carry an N-linked (GlcNAc...) asparagine glycan. Cysteine 148 and cysteine 162 are joined by a disulfide. Transmembrane regions (helical) follow at residues 245–269 (PLFYVINIVTPCVLIAFMAILVFYL), 277–295 (MTLVISVLLAQSVFLLLVS), and 311–332 (YLLFIMLLVTAVVVICVVVLNF). The Cytoplasmic portion of the chain corresponds to 333-467 (HFRTPSTHVM…WNRVARTLDR (135 aa)). At tyrosine 388 the chain carries Phosphotyrosine; by Tyr-kinases. Residues 468–490 (LCLFLITPMLVVGTLWIFLMGIY) form a helical membrane-spanning segment.

The protein belongs to the ligand-gated ion channel (TC 1.A.9) family. Acetylcholine receptor (TC 1.A.9.1) subfamily. As to quaternary structure, pentamer of two alpha chains, and one each of the beta, delta, and gamma chains.

The protein resides in the postsynaptic cell membrane. It localises to the cell membrane. It carries out the reaction K(+)(in) = K(+)(out). The enzyme catalyses Na(+)(in) = Na(+)(out). Functionally, after binding acetylcholine, the AChR responds by an extensive change in conformation that affects all subunits and leads to opening of an ion-conducting channel across the plasma membrane. This Gallus gallus (Chicken) protein is Acetylcholine receptor subunit delta (CHRND).